Here is a 187-residue protein sequence, read N- to C-terminus: Pterin-4-alpha-carbinolamine dehydratase 2, mitochondrial (187 aa).

The transit peptide at M1 to F33 directs the protein to the mitochondrion.

The protein belongs to the pterin-4-alpha-carbinolamine dehydratase family.

The protein localises to the mitochondrion. It catalyses the reaction (4aS,6R)-4a-hydroxy-L-erythro-5,6,7,8-tetrahydrobiopterin = (6R)-L-erythro-6,7-dihydrobiopterin + H2O. Functionally, involved in tetrahydrobiopterin biosynthesis. Possesses pterin-4-alpha-carbinolamine dehydratase activity when expressed in a bacterial heterolgous system. This is Pterin-4-alpha-carbinolamine dehydratase 2, mitochondrial from Arabidopsis thaliana (Mouse-ear cress).